The sequence spans 201 residues: Small ribosomal subunit protein uS4c (201 aa).

A disordered region spans residues 16 to 37 (GALPGLTSKRPRSGSDLRNQSR). In terms of domain architecture, S4 RNA-binding spans 89 to 152 (MRLDNTLFRL…RSRTLIQNHI (64 aa)).

This sequence belongs to the universal ribosomal protein uS4 family. Part of the 30S ribosomal subunit. Contacts protein S5. The interaction surface between S4 and S5 is involved in control of translational fidelity.

It localises to the plastid. The protein localises to the chloroplast. Its function is as follows. One of the primary rRNA binding proteins, it binds directly to 16S rRNA where it nucleates assembly of the body of the 30S subunit. With S5 and S12 plays an important role in translational accuracy. This is Small ribosomal subunit protein uS4c (rps4) from Chloranthus spicatus (Chulantree).